The primary structure comprises 550 residues: Formate--tetrahydrofolate ligase (550 aa).

62-69 (TPAGEGKS) is an ATP binding site.

The protein belongs to the formate--tetrahydrofolate ligase family.

The enzyme catalyses (6S)-5,6,7,8-tetrahydrofolate + formate + ATP = (6R)-10-formyltetrahydrofolate + ADP + phosphate. The protein operates within one-carbon metabolism; tetrahydrofolate interconversion. The sequence is that of Formate--tetrahydrofolate ligase from Corynebacterium diphtheriae (strain ATCC 700971 / NCTC 13129 / Biotype gravis).